The chain runs to 261 residues: Phosphatidylglycerol--prolipoprotein diacylglyceryl transferase (261 aa).

3 helical membrane-spanning segments follow: residues 20–40 (LAIH…VWLA), 54–74 (IIDF…LYYV), and 94–114 (GGGA…VFSY). Arginine 139 contributes to the a 1,2-diacyl-sn-glycero-3-phospho-(1'-sn-glycerol) binding site. 3 consecutive transmembrane segments (helical) span residues 175–195 (MPTF…VMVF), 205–225 (GDIF…VEGM), and 235–255 (ARVS…LFIY).

This sequence belongs to the Lgt family.

Its subcellular location is the cell membrane. The enzyme catalyses L-cysteinyl-[prolipoprotein] + a 1,2-diacyl-sn-glycero-3-phospho-(1'-sn-glycerol) = an S-1,2-diacyl-sn-glyceryl-L-cysteinyl-[prolipoprotein] + sn-glycerol 1-phosphate + H(+). The protein operates within protein modification; lipoprotein biosynthesis (diacylglyceryl transfer). In terms of biological role, catalyzes the transfer of the diacylglyceryl group from phosphatidylglycerol to the sulfhydryl group of the N-terminal cysteine of a prolipoprotein, the first step in the formation of mature lipoproteins. This Lactococcus lactis subsp. lactis (strain IL1403) (Streptococcus lactis) protein is Phosphatidylglycerol--prolipoprotein diacylglyceryl transferase.